Here is a 102-residue protein sequence, read N- to C-terminus: Small ribosomal subunit protein uS10 (102 aa).

Belongs to the universal ribosomal protein uS10 family. As to quaternary structure, part of the 30S ribosomal subunit.

Functionally, involved in the binding of tRNA to the ribosomes. In Pelagibacter ubique (strain HTCC1062), this protein is Small ribosomal subunit protein uS10.